Consider the following 395-residue polypeptide: Renin (395 aa).

The N-terminal stretch at Met-1–Ala-21 is a signal peptide. A propeptide spans Leu-22–Lys-43 (activation peptide). Asn-64 carries an N-linked (GlcNAc...) asparagine glycan. Residues Tyr-79–Ala-392 form the Peptidase A1 domain. Residue Asp-97 is part of the active site. Intrachain disulfides connect Cys-110-Cys-117 and Cys-274-Cys-278. Residue Asp-283 is part of the active site. Residues Cys-316 and Cys-351 are joined by a disulfide bond.

The protein belongs to the peptidase A1 family. Post-translationally, N-glycosylated. As to expression, expressed by the venom gland (at protein level).

The protein localises to the secreted. The enzyme catalyses Cleavage of Leu-|-Xaa bond in angiotensinogen to generate angiotensin I.. Inhibited completely by aspartyl protease inhibitor pepstatin A, but not by the serine- or metalloproteinase inhibitors PMSF or EDTA. Its function is as follows. Renin is a highly specific endopeptidase, whose only known function is to generate angiotensin I from angiotensinogen in the plasma, initiating a cascade of reactions that produce an elevation of blood pressure and increased sodium retention by the kidney. This protein is also found in snake venom and shown to specifically cleave human and porcine angiotensinogen into angiotensin I. It does not have general protease activity, no cleavage of alpha or beta casein. May be directly responsible for elevation of blood pressure in the victims of envenomation. The polypeptide is Renin (Echis ocellatus (Ocellated saw-scaled viper)).